The chain runs to 124 residues: Large ribosomal subunit protein uL18 (124 aa).

This sequence belongs to the universal ribosomal protein uL18 family. As to quaternary structure, part of the 50S ribosomal subunit; part of the 5S rRNA/L5/L18/L25 subcomplex. Contacts the 5S and 23S rRNAs.

Its function is as follows. This is one of the proteins that bind and probably mediate the attachment of the 5S RNA into the large ribosomal subunit, where it forms part of the central protuberance. The polypeptide is Large ribosomal subunit protein uL18 (Desulfosudis oleivorans (strain DSM 6200 / JCM 39069 / Hxd3) (Desulfococcus oleovorans)).